A 424-amino-acid chain; its full sequence is UPF0761 membrane protein Smlt0865 (424 aa).

6 consecutive transmembrane segments (helical) span residues 48–68 (VFAL…FPVF), 101–121 (SAGQ…LITL), 144–164 (FLVY…SLAV), 181–201 (WLAE…CITL), 216–236 (AVPG…GIGA), and 251–271 (VAFV…VLLG).

Belongs to the UPF0761 family.

It is found in the cell inner membrane. The protein is UPF0761 membrane protein Smlt0865 of Stenotrophomonas maltophilia (strain K279a).